Consider the following 316-residue polypeptide: 4-hydroxy-3-methylbut-2-enyl diphosphate reductase (316 aa).

C12 serves as a coordination point for [4Fe-4S] cluster. (2E)-4-hydroxy-3-methylbut-2-enyl diphosphate contacts are provided by H41 and H74. Positions 41 and 74 each coordinate dimethylallyl diphosphate. Residues H41 and H74 each coordinate isopentenyl diphosphate. C96 lines the [4Fe-4S] cluster pocket. (2E)-4-hydroxy-3-methylbut-2-enyl diphosphate is bound at residue H124. H124 lines the dimethylallyl diphosphate pocket. H124 provides a ligand contact to isopentenyl diphosphate. The active-site Proton donor is the E126. Position 168 (T168) interacts with (2E)-4-hydroxy-3-methylbut-2-enyl diphosphate. C198 is a [4Fe-4S] cluster binding site. Positions 226, 227, 228, and 270 each coordinate (2E)-4-hydroxy-3-methylbut-2-enyl diphosphate. Dimethylallyl diphosphate contacts are provided by S226, S227, N228, and S270. Positions 226, 227, 228, and 270 each coordinate isopentenyl diphosphate.

The protein belongs to the IspH family. The cofactor is [4Fe-4S] cluster.

It catalyses the reaction isopentenyl diphosphate + 2 oxidized [2Fe-2S]-[ferredoxin] + H2O = (2E)-4-hydroxy-3-methylbut-2-enyl diphosphate + 2 reduced [2Fe-2S]-[ferredoxin] + 2 H(+). The catalysed reaction is dimethylallyl diphosphate + 2 oxidized [2Fe-2S]-[ferredoxin] + H2O = (2E)-4-hydroxy-3-methylbut-2-enyl diphosphate + 2 reduced [2Fe-2S]-[ferredoxin] + 2 H(+). Its pathway is isoprenoid biosynthesis; dimethylallyl diphosphate biosynthesis; dimethylallyl diphosphate from (2E)-4-hydroxy-3-methylbutenyl diphosphate: step 1/1. It functions in the pathway isoprenoid biosynthesis; isopentenyl diphosphate biosynthesis via DXP pathway; isopentenyl diphosphate from 1-deoxy-D-xylulose 5-phosphate: step 6/6. Catalyzes the conversion of 1-hydroxy-2-methyl-2-(E)-butenyl 4-diphosphate (HMBPP) into a mixture of isopentenyl diphosphate (IPP) and dimethylallyl diphosphate (DMAPP). Acts in the terminal step of the DOXP/MEP pathway for isoprenoid precursor biosynthesis. This Acinetobacter baylyi (strain ATCC 33305 / BD413 / ADP1) protein is 4-hydroxy-3-methylbut-2-enyl diphosphate reductase.